A 374-amino-acid polypeptide reads, in one-letter code: Translocating chain-associated membrane protein 1 (374 aa).

Residues Met1 to Met32 are Cytoplasmic-facing. Residues Leu33–Leu53 traverse the membrane as a helical segment. Topologically, residues Gln54–Ala81 are lumenal. Asn56 carries N-linked (GlcNAc...) asparagine glycosylation. Residues Thr82 to Leu102 form a helical membrane-spanning segment. Residues Asp103–Glu121 are Cytoplasmic-facing. In terms of domain architecture, TLC spans Ser117 to His326. Residues Ser122–Ser142 traverse the membrane as a helical segment. The Lumenal portion of the chain corresponds to Glu143–Asn159. A helical transmembrane segment spans residues Leu160–Phe180. Residues Pro181–Asp192 are Cytoplasmic-facing. The chain crosses the membrane as a helical span at residues Ile193–Leu213. Position 214 (Asn214) is a topological domain, lumenal. The chain crosses the membrane as a helical span at residues Leu215 to Ile235. At Ser236 to Ser251 the chain is on the cytoplasmic side. The helical transmembrane segment at Leu252–Val272 threads the bilayer. Residues Gly273–Arg297 lie on the Lumenal side of the membrane. A helical membrane pass occupies residues Ile298–Phe318. The Cytoplasmic segment spans residues Gln319–Ser374. The disordered stretch occupies residues Pro333–Ser374. Residues Val334 to Arg347 are compositionally biased toward basic residues. Polar residues predominate over residues Asn352–Ala363. Position 365 is a phosphoserine (Ser365).

The protein belongs to the TRAM family. In terms of assembly, interacts with SEC61B. May interact with Derlin-1/DERL1. Post-translationally, N-glycosylated.

It localises to the endoplasmic reticulum membrane. In terms of biological role, involved in the translocation of nascent protein chains into or through the endoplasmic reticulum (ER) membrane by facilitating the proper chain positioning at the SEC61 channel. Regulates the exposure of nascent secretory protein chain to the cytosol during translocation into the ER. May affect the phospholipid bilayer in the vicinity of the lateral gate of the SEC61 channel, thereby facilitating ER protein transport. Intimately associates with transmembrane (TM) domain of nascent membrane proteins during the entire integration process into the ER membrane. Associates with the second TM domain of G-protein-coupled receptor opsin/OPSD nascent chain in the ER membrane, which may facilitate its integration into the membrane. Under conditions of ER stress, participates in the disposal of misfolded ER membrane proteins during the unfolded protein response (UPR), an integrated stress response (ISR) pathway, by selectively retrotranslocating misfolded ER-membrane proteins from the ER into the cytosol where they are ubiquitinated and degraded by the proteasome. This is Translocating chain-associated membrane protein 1 from Rattus norvegicus (Rat).